A 520-amino-acid polypeptide reads, in one-letter code: Cobyric acid synthase (520 aa).

Residues 257 to 451 enclose the GATase cobBQ-type domain; it reads WLTVAAVRLP…VHGLLESDGF (195 aa). Residue C338 is the Nucleophile of the active site. The active site involves H443.

It belongs to the CobB/CobQ family. CobQ subfamily.

The protein operates within cofactor biosynthesis; adenosylcobalamin biosynthesis. Its function is as follows. Catalyzes amidations at positions B, D, E, and G on adenosylcobyrinic A,C-diamide. NH(2) groups are provided by glutamine, and one molecule of ATP is hydrogenolyzed for each amidation. The protein is Cobyric acid synthase of Nocardia farcinica (strain IFM 10152).